The primary structure comprises 173 residues: Peptide deformylase (173 aa).

Fe cation contacts are provided by Cys-91 and His-133. The active site involves Glu-134. Residue His-137 participates in Fe cation binding.

The protein belongs to the polypeptide deformylase family. The cofactor is Fe(2+).

It catalyses the reaction N-terminal N-formyl-L-methionyl-[peptide] + H2O = N-terminal L-methionyl-[peptide] + formate. Removes the formyl group from the N-terminal Met of newly synthesized proteins. Requires at least a dipeptide for an efficient rate of reaction. N-terminal L-methionine is a prerequisite for activity but the enzyme has broad specificity at other positions. The sequence is that of Peptide deformylase from Buchnera aphidicola subsp. Acyrthosiphon pisum (strain 5A).